A 357-amino-acid polypeptide reads, in one-letter code: (+)-eremophilene synthase (357 aa).

2 residues coordinate Mg(2+): Asp100 and Glu105. Positions 100-105 (DDDFDE) match the DDXXE motif motif. Arg198 contributes to the substrate binding site. Residues Asn244 and Ser248 each coordinate Mg(2+). A substrate-binding site is contributed by Lys251. Mg(2+) is bound at residue Asp252. 331-332 (RY) contributes to the substrate binding site.

The protein belongs to the terpene synthase family. The cofactor is Mg(2+).

The catalysed reaction is (2E,6E)-farnesyl diphosphate = (+)-eremophilene + diphosphate. The protein operates within secondary metabolite biosynthesis; terpenoid biosynthesis. Functionally, catalyzes the conversion of (2E,6E)-farnesyl diphosphate (FPP) to yield the bicyclic sesquiterpene eremophilene via a 1,10-cyclization, which requires the abstraction of the pyrophosphate from FPP to yield the (E,E)-germacradienyl cation. The only accepted substrate is farnesyl diphosphate (FPP). The chain is (+)-eremophilene synthase from Gibberella fujikuroi (strain CBS 195.34 / IMI 58289 / NRRL A-6831) (Bakanae and foot rot disease fungus).